A 94-amino-acid chain; its full sequence is Integration host factor subunit beta (94 aa).

The protein belongs to the bacterial histone-like protein family. As to quaternary structure, heterodimer of an alpha and a beta chain.

In terms of biological role, this protein is one of the two subunits of integration host factor, a specific DNA-binding protein that functions in genetic recombination as well as in transcriptional and translational control. In Chelativorans sp. (strain BNC1), this protein is Integration host factor subunit beta.